We begin with the raw amino-acid sequence, 97 residues long: Homeobox protein HD-9 (97 aa).

The segment at residues Met6–Cys65 is a DNA-binding region (homeobox).

Its subcellular location is the nucleus. This chain is Homeobox protein HD-9 (HD-9), found in Encephalitozoon cuniculi (strain GB-M1) (Microsporidian parasite).